The sequence spans 433 residues: Putative zinc metalloprotease BB_0118 (433 aa).

H17 serves as a coordination point for Zn(2+). The active site involves E18. Residue H21 participates in Zn(2+) binding. The chain crosses the membrane as a helical span at residues I98–S120. Residues T193–G265 form the PDZ domain. Transmembrane regions (helical) follow at residues V334 to I356, L366 to F388, and T401 to N423.

Belongs to the peptidase M50B family. The cofactor is Zn(2+).

The protein localises to the cell inner membrane. The chain is Putative zinc metalloprotease BB_0118 from Borreliella burgdorferi (strain ATCC 35210 / DSM 4680 / CIP 102532 / B31) (Borrelia burgdorferi).